A 288-amino-acid polypeptide reads, in one-letter code: UDP-3-O-acyl-N-acetylglucosamine deacetylase (288 aa).

H79, H236, and D240 together coordinate Zn(2+). Catalysis depends on H263, which acts as the Proton donor.

The protein belongs to the LpxC family. The cofactor is Zn(2+).

The enzyme catalyses a UDP-3-O-[(3R)-3-hydroxyacyl]-N-acetyl-alpha-D-glucosamine + H2O = a UDP-3-O-[(3R)-3-hydroxyacyl]-alpha-D-glucosamine + acetate. It participates in glycolipid biosynthesis; lipid IV(A) biosynthesis; lipid IV(A) from (3R)-3-hydroxytetradecanoyl-[acyl-carrier-protein] and UDP-N-acetyl-alpha-D-glucosamine: step 2/6. In terms of biological role, catalyzes the hydrolysis of UDP-3-O-myristoyl-N-acetylglucosamine to form UDP-3-O-myristoylglucosamine and acetate, the committed step in lipid A biosynthesis. In Rickettsia conorii (strain ATCC VR-613 / Malish 7), this protein is UDP-3-O-acyl-N-acetylglucosamine deacetylase.